The sequence spans 206 residues: Ribosomal RNA large subunit methyltransferase E (206 aa).

S-adenosyl-L-methionine-binding residues include Gly60, Trp62, Asp80, Asp96, and Asp121. Catalysis depends on Lys161, which acts as the Proton acceptor.

Belongs to the class I-like SAM-binding methyltransferase superfamily. RNA methyltransferase RlmE family.

It localises to the cytoplasm. It catalyses the reaction uridine(2552) in 23S rRNA + S-adenosyl-L-methionine = 2'-O-methyluridine(2552) in 23S rRNA + S-adenosyl-L-homocysteine + H(+). In terms of biological role, specifically methylates the uridine in position 2552 of 23S rRNA at the 2'-O position of the ribose in the fully assembled 50S ribosomal subunit. The protein is Ribosomal RNA large subunit methyltransferase E of Legionella pneumophila (strain Lens).